A 162-amino-acid polypeptide reads, in one-letter code: 2-amino-4-hydroxy-6-hydroxymethyldihydropteridine pyrophosphokinase (162 aa).

The protein belongs to the HPPK family.

The catalysed reaction is 6-hydroxymethyl-7,8-dihydropterin + ATP = (7,8-dihydropterin-6-yl)methyl diphosphate + AMP + H(+). The protein operates within cofactor biosynthesis; tetrahydrofolate biosynthesis; 2-amino-4-hydroxy-6-hydroxymethyl-7,8-dihydropteridine diphosphate from 7,8-dihydroneopterin triphosphate: step 4/4. Catalyzes the transfer of pyrophosphate from adenosine triphosphate (ATP) to 6-hydroxymethyl-7,8-dihydropterin, an enzymatic step in folate biosynthesis pathway. This Streptococcus pyogenes serotype M3 (strain ATCC BAA-595 / MGAS315) protein is 2-amino-4-hydroxy-6-hydroxymethyldihydropteridine pyrophosphokinase (folK).